The sequence spans 182 residues: CDP-diacylglycerol--glycerol-3-phosphate 3-phosphatidyltransferase (182 aa).

The Cytoplasmic segment spans residues 2 to 12 (QFNIPTLLTLF). Residues 13-37 (RVILIPFFVLVFYLPVTWSPFAAAL) form a helical membrane-spanning segment. At 38–60 (IFCVAAVTDWFDGFLARRWNQST) the chain is on the periplasmic side. The chain crosses the membrane as a helical span at residues 61–81 (RFGAFLDPVADKVLVAIAMVL). Over 82-86 (VTEHY) the chain is Cytoplasmic. A helical transmembrane segment spans residues 87–107 (HSWWVTLPAATMIAREIIISA). Over 108–145 (LREWMAELGKRSSVAVSWIGKVKTTAQMVALAWLLWRP) the chain is Periplasmic. The chain crosses the membrane as a helical span at residues 146–168 (NIWVEYAGIALFFVAAVLTLWSM). At 169–181 (LQYLSAARADLLD) the chain is on the cytoplasmic side.

The protein belongs to the CDP-alcohol phosphatidyltransferase class-I family.

The protein localises to the cell inner membrane. It carries out the reaction a CDP-1,2-diacyl-sn-glycerol + sn-glycerol 3-phosphate = a 1,2-diacyl-sn-glycero-3-phospho-(1'-sn-glycero-3'-phosphate) + CMP + H(+). It functions in the pathway phospholipid metabolism; phosphatidylglycerol biosynthesis; phosphatidylglycerol from CDP-diacylglycerol: step 1/2. Its function is as follows. Catalyzes the conversion of cytidine diphosphate diacylglycerol (CDP-DG) and glycerol 3-phosphate into phosphatidylglycerol. Essential for the synthesis of anionic phospholipids, thereby playing a role in balancing the ratio of zwitterionic and anionic phospholipids, which is thought to be important for normal membrane function. This is CDP-diacylglycerol--glycerol-3-phosphate 3-phosphatidyltransferase from Shigella sonnei (strain Ss046).